An 820-amino-acid polypeptide reads, in one-letter code: 1,4-alpha-glucan-branching enzyme, chloroplastic/amyloplastic (820 aa).

Low complexity predominate over residues 1–20; that stretch reads MLCLTSSSSSAPAPLLPSLA. A disordered region spans residues 1 to 28; sequence MLCLTSSSSSAPAPLLPSLADRPSPGIA. A chloroplast-targeting transit peptide spans 1–64; that stretch reads MLCLTSSSSS…SVPATARKNK (64 aa). Positions 153 and 188 each coordinate (1,4-alpha-D-glucosyl)n. Asp409 acts as the Nucleophile in catalysis. Catalysis depends on Glu464, which acts as the Proton donor.

This sequence belongs to the glycosyl hydrolase 13 family. GlgB subfamily. In terms of assembly, monomer.

The protein resides in the plastid. It is found in the chloroplast. Its subcellular location is the amyloplast. It catalyses the reaction Transfers a segment of a (1-&gt;4)-alpha-D-glucan chain to a primary hydroxy group in a similar glucan chain.. Its pathway is glycan biosynthesis; starch biosynthesis. Functionally, catalyzes the formation of the alpha-1,6-glucosidic linkages in starch by scission of a 1,4-alpha-linked oligosaccharide from growing alpha-1,4-glucan chains and the subsequent attachment of the oligosaccharide to the alpha-1,6 position. The protein is 1,4-alpha-glucan-branching enzyme, chloroplastic/amyloplastic (SBE1) of Oryza sativa subsp. japonica (Rice).